The chain runs to 434 residues: Beta-enolase (434 aa).

A2 bears the N-acetylalanine mark. A Phosphothreonine modification is found at T72. Residues S83 and S157 each carry the phosphoserine modification. 2 residues coordinate substrate: H158 and E167. S176 carries the phosphoserine modification. T205 bears the Phosphothreonine mark. E210 functions as the Proton donor in the catalytic mechanism. The residue at position 229 (T229) is a Phosphothreonine. Y236 bears the Phosphotyrosine mark. D245 is a Mg(2+) binding site. S263 is subject to Phosphoserine. Substrate-binding residues include E293 and D318. Residues E293 and D318 each coordinate Mg(2+). The active-site Proton acceptor is K343. Residues 370–373 (SHRS) and K394 each bind substrate.

Belongs to the enolase family. In terms of assembly, mammalian enolase is composed of 3 isozyme subunits, alpha, beta and gamma, which can form homodimers or heterodimers which are cell-type and development-specific. Interacts with PNKD. The cofactor is Mg(2+).

The protein resides in the cytoplasm. It catalyses the reaction (2R)-2-phosphoglycerate = phosphoenolpyruvate + H2O. Its pathway is carbohydrate degradation; glycolysis; pyruvate from D-glyceraldehyde 3-phosphate: step 4/5. Its function is as follows. Glycolytic enzyme that catalyzes the conversion of 2-phosphoglycerate to phosphoenolpyruvate. Appears to have a function in striated muscle development and regeneration. The sequence is that of Beta-enolase (ENO3) from Bos taurus (Bovine).